The primary structure comprises 541 residues: MPKILEFDEHARRALERGVDALANAVKVTLGPKGRYVVLDKKWGAPTITNDGVTVAREVELDDPFENLGAQLTKEVATKTNDIAGDGTTTATVLAQAMVHEGLRAVTAGANPMGLKRGMDAAAEAVGDALKEAAREVESREDMASVATISSRDSVIGDLLAEAFDKVGKDGVITVEESNTMGTELEFTEGMQFDKGYISQYFVTDPERMEAVLEDPYILLHQGKISAVAELLPLLEKVIQSGKPLFILAEDVEGEALSTLVVNKIRGTFNAVAVKSPAFGDRRKAMMQDIATLTGGQVVAPEVGLKLDQVGLEVLGQARRVVVTKDDTTIVDGAGDPKDVEGRVNQIKAEVENTDSDWDREKLQERLAKLAGGVCVIKVGAATEVELKEKKHRIEDAVSATRAAIEEGIVAGGGSALVHAVSVLSDDLGLTGDEALGVRVVRKAADEPLRWIAENGGVNGYVVTTKVRELGLGNGFNAATEEYGDLVAQGVLDPVKVTRSALVNATSIAGMLLTTETLVVDKPEEEEPAAAGHGHGHGHGH.

ATP-binding positions include 29–32, 86–90, G413, 477–479, and D493; these read TLGP, DGTTT, and NAA.

Belongs to the chaperonin (HSP60) family. As to quaternary structure, forms a cylinder of 14 subunits composed of two heptameric rings stacked back-to-back. Interacts with the co-chaperonin GroES.

It is found in the cytoplasm. It carries out the reaction ATP + H2O + a folded polypeptide = ADP + phosphate + an unfolded polypeptide.. Its function is as follows. Together with its co-chaperonin GroES, plays an essential role in assisting protein folding. The GroEL-GroES system forms a nano-cage that allows encapsulation of the non-native substrate proteins and provides a physical environment optimized to promote and accelerate protein folding. The polypeptide is Chaperonin GroEL 1 (Nocardioides sp. (strain ATCC BAA-499 / JS614)).